Consider the following 42-residue polypeptide: MKVMGSLKSAKSRDRDCKIVRRKGRVYVINKKKPRFKARQGY.

Belongs to the bacterial ribosomal protein bL36 family.

This is Large ribosomal subunit protein bL36 from Anaplasma phagocytophilum (strain HZ).